The chain runs to 89 residues: Putative regulatory protein Dalk_1931 (89 aa).

This sequence belongs to the RemA family.

This is Putative regulatory protein Dalk_1931 from Desulfatibacillum aliphaticivorans.